The sequence spans 721 residues: bZIP transcription factor 17 (721 aa).

Disordered regions lie at residues 1–51 (MAEP…LMSD) and 87–232 (QEQF…EKKR). At 1 to 366 (MAEPITKEQP…KSEAKTKKVA (366 aa)) the chain is on the cytoplasmic side. Positions 9 to 25 (QPPPPAPDPNSTYPPPS) are enriched in pro residues. The segment covering 125-141 (ESPRDSDDRCSGADHNL) has biased composition (basic and acidic residues). Residues 146–170 (PLSSQGSGNCGSDVSEATNESSPKS) show a composition bias toward polar residues. The segment covering 204-216 (DESRNSKYRRSGE) has biased composition (basic and acidic residues). The 61-residue stretch at 228 to 288 (DEKKRARLMR…AENATLRQQL (61 aa)) folds into the bZIP domain. The basic motif stretch occupies residues 230 to 261 (KKRARLMRNRESAQLSRQRKKHYVEELEEKVR). The leucine-zipper stretch occupies residues 267–274 (ITDLNGKI). Residues 337–359 (PRLKPQNTLGTSKAKKSESKKSE) form a disordered region. Residues 367-387 (SISFLGLLFCLFLFGALAPIV) form a helical membrane-spanning segment. Topologically, residues 388-721 (NVNYGGISGA…RSGAPHLVTT (334 aa)) are lumenal. Over residues 422–436 (TSRSGAGTGVSNSNG) the composition is skewed to polar residues. Positions 422–462 (TSRSGAGTGVSNSNGMHRGRDSDRGARKNISATESSVTPGN) are disordered. 4 N-linked (GlcNAc...) asparagine glycosylation sites follow: asparagine 450, asparagine 462, asparagine 609, and asparagine 617. Positions 451 to 462 (ISATESSVTPGN) are enriched in polar residues. Residues 627–630 (RRIL) carry the RRIL cleavage motif motif. Residues asparagine 643 and asparagine 651 are each glycosylated (N-linked (GlcNAc...) asparagine).

This sequence belongs to the bZIP family. In terms of assembly, interacts with BZIP28.

The protein resides in the endoplasmic reticulum membrane. Its subcellular location is the golgi apparatus membrane. It localises to the nucleus. Functionally, transcriptional activator involved in salt and osmotic stress responses. Functions as a stress sensor and transducer in a signaling pathway that resembles an ER stress response. Following salt stress, BZIP17 is cleaved by SBT6.1 (S1P) and S2P at the C-terminus and the N-terminal bZIP component is translocated to the nucleus, where it activates the expression of salt stress response genes. Functions as a stress sensor and transducer in ER stress signaling pathway. ER stress induces proteolysis of BZIP17 by SBT6.1 (S1P) and S2P, and the N-terminal bZIP component is translocated to the nucleus, where it activates the expression and production of ER chaperones, as well as protein involved in brassinosteroid (BR) signaling, which is required for stress acclimation and growth. This is bZIP transcription factor 17 from Arabidopsis thaliana (Mouse-ear cress).